Here is a 417-residue protein sequence, read N- to C-terminus: Serine hydroxymethyltransferase (417 aa).

(6S)-5,6,7,8-tetrahydrofolate is bound by residues Leu120 and 124-126 (GHL). Lys229 is modified (N6-(pyridoxal phosphate)lysine).

The protein belongs to the SHMT family. As to quaternary structure, homodimer. The cofactor is pyridoxal 5'-phosphate.

It localises to the cytoplasm. It catalyses the reaction (6R)-5,10-methylene-5,6,7,8-tetrahydrofolate + glycine + H2O = (6S)-5,6,7,8-tetrahydrofolate + L-serine. It functions in the pathway one-carbon metabolism; tetrahydrofolate interconversion. The protein operates within amino-acid biosynthesis; glycine biosynthesis; glycine from L-serine: step 1/1. Catalyzes the reversible interconversion of serine and glycine with tetrahydrofolate (THF) serving as the one-carbon carrier. This reaction serves as the major source of one-carbon groups required for the biosynthesis of purines, thymidylate, methionine, and other important biomolecules. Also exhibits THF-independent aldolase activity toward beta-hydroxyamino acids, producing glycine and aldehydes, via a retro-aldol mechanism. This Anaeromyxobacter dehalogenans (strain 2CP-1 / ATCC BAA-258) protein is Serine hydroxymethyltransferase.